The following is a 260-amino-acid chain: 2-oxo-tetronate isomerase (260 aa).

E143 functions as the Proton donor/acceptor in the catalytic mechanism. Residues E143, D178, Q204, and E240 each coordinate Mg(2+). E240 serves as the catalytic Proton donor/acceptor.

This sequence belongs to the hyi family. OtnI subfamily.

It carries out the reaction 2-dehydro-L-erythronate = 3-dehydro-L-erythronate. It catalyses the reaction 2-dehydro-D-erythronate = 3-dehydro-D-erythronate. Its function is as follows. Catalyzes the isomerization of 2-oxo-tetronate to 3-oxo-tetronate. This chain is 2-oxo-tetronate isomerase, found in Cupriavidus necator (strain ATCC 17699 / DSM 428 / KCTC 22496 / NCIMB 10442 / H16 / Stanier 337) (Ralstonia eutropha).